Consider the following 123-residue polypeptide: Thioredoxin domain-containing protein 17 (123 aa).

Residues serine 41–aspartate 123 form the Thioredoxin domain. Residues cysteine 43 and cysteine 46 each act as nucleophile in the active site. Residues cysteine 43 and cysteine 46 are joined by a disulfide bond.

The protein belongs to the thioredoxin family. In terms of tissue distribution, predominantly expressed in liver, brain and muscle. Also expressed in kidney, intestine, skin, stomach, gill and head kidney.

The protein localises to the cytoplasm. Its function is as follows. Disulfide reductase. May participate in various redox reactions through the reversible oxidation of its active center dithiol to a disulfide and catalyze dithiol-disulfide exchange reactions. Has peroxidase activity and may contribute to the elimination of cellular hydrogen peroxide. May function as an antioxidant involved in response to viral infection. The polypeptide is Thioredoxin domain-containing protein 17 (Epinephelus coioides (Orange-spotted grouper)).